The chain runs to 162 residues: Corticoliberin-2 (162 aa).

The first 24 residues, 1-24 (MRLNFLVTTMALLVAFPPPYECRA), serve as a signal peptide directing secretion. A propeptide spanning residues 25 to 119 (IDSSSNQPVT…ALDSEERERR (95 aa)) is cleaved from the precursor. Positions 57 to 79 (LGNRNKNSPRSPPDTYPEASQYS) are disordered. At Phe-160 the chain carries Phenylalanine amide.

This sequence belongs to the sauvagine/corticotropin-releasing factor/urotensin I family.

It is found in the secreted. In terms of biological role, this hormone from hypothalamus regulates the release of corticotropin from pituitary gland. This is Corticoliberin-2 (crf2) from Catostomus commersonii (White sucker).